The following is a 264-amino-acid chain: Thymidylate synthase (264 aa).

R21 provides a ligand contact to dUMP. Residue H51 coordinates (6R)-5,10-methylene-5,6,7,8-tetrahydrofolate. 126-127 (RR) serves as a coordination point for dUMP. C146 functions as the Nucleophile in the catalytic mechanism. DUMP-binding positions include 166 to 169 (RSAD), N177, and 207 to 209 (HLY). D169 provides a ligand contact to (6R)-5,10-methylene-5,6,7,8-tetrahydrofolate. A263 contacts (6R)-5,10-methylene-5,6,7,8-tetrahydrofolate.

The protein belongs to the thymidylate synthase family. Bacterial-type ThyA subfamily. Homodimer.

It is found in the cytoplasm. It carries out the reaction dUMP + (6R)-5,10-methylene-5,6,7,8-tetrahydrofolate = 7,8-dihydrofolate + dTMP. Its pathway is pyrimidine metabolism; dTTP biosynthesis. In terms of biological role, catalyzes the reductive methylation of 2'-deoxyuridine-5'-monophosphate (dUMP) to 2'-deoxythymidine-5'-monophosphate (dTMP) while utilizing 5,10-methylenetetrahydrofolate (mTHF) as the methyl donor and reductant in the reaction, yielding dihydrofolate (DHF) as a by-product. This enzymatic reaction provides an intracellular de novo source of dTMP, an essential precursor for DNA biosynthesis. The sequence is that of Thymidylate synthase from Stutzerimonas stutzeri (strain A1501) (Pseudomonas stutzeri).